We begin with the raw amino-acid sequence, 540 residues long: Early growth response protein 1 (540 aa).

Disordered stretches follow at residues 1–105 (MAAA…AESF) and 162–240 (VSMT…PAYP). Gly residues predominate over residues 64 to 75 (SSGGGGGGGGGS). The segment covering 167–190 (PPATSSSASSPAASSSASQSPPLS) has biased composition (low complexity). Residues 192 to 201 (AVQSNDSSPI) are compositionally biased toward polar residues. Lysine 304 is covalently cross-linked (Glycyl lysine isopeptide (Lys-Gly) (interchain with G-Cter in SUMO2)). A disordered region spans residues 317–337 (PSRMRKYPNRPSKTPPHERPY). The segment at 337-361 (YACPVESCDRRFSRSDELTRHIRIH) adopts a C2H2-type 1 zinc-finger fold. The segment at 366 to 388 (PQCRISMRNFSRSDHLTTHIRTH) adopts a C2H2-type 2; degenerate zinc-finger fold. Residues 394-416 (FACDICGRKFARSDERKRHTKIH) form a C2H2-type 3 zinc finger. Residues 407–482 (DERKRHTKIH…SPGSSTYPSP (76 aa)) form a disordered region. A compositionally biased stretch (basic residues) spans 411–421 (RHTKIHLRQKD). The segment covering 427–482 (SAASAATSSLPSYPSPVATSYPSPATTSYPSPATTSYPSPVPTSYSSPGSSTYPSP) has biased composition (low complexity).

This sequence belongs to the EGR C2H2-type zinc-finger protein family. As to quaternary structure, interacts with SNAI1 and SP1 upon 12-O-tetradecanoylphorbol-13-acetate (TPA) induction.

Its subcellular location is the nucleus. It localises to the cytoplasm. In terms of biological role, transcriptional regulator. Recognizes and binds to the DNA sequence 5'-GCG(T/G)GGGCG-3'(EGR-site) in the promoter region of target genes. Binds double-stranded target DNA, irrespective of the cytosine methylation status. Regulates the transcription of numerous target genes, and thereby plays an important role in regulating the response to growth factors, DNA damage, and ischemia. Plays a role in the regulation of cell survival, proliferation and cell death. Activates expression of p53/TP53 and TGFB1, and thereby helps prevent tumor formation. Required for normal progress through mitosis and normal proliferation of hepatocytes after partial hepatectomy. Mediates responses to ischemia and hypoxia; regulates the expression of proteins such as IL1B and CXCL2 that are involved in inflammatory processes and development of tissue damage after ischemia. Regulates biosynthesis of luteinizing hormone (LHB) in the pituitary. Regulates the amplitude of the expression rhythms of clock genes: BMAL1, PER2 and NR1D1 in the liver via the activation of PER1 (clock repressor) transcription. Regulates the rhythmic expression of core-clock gene BMAL1 in the suprachiasmatic nucleus (SCN). The chain is Early growth response protein 1 (EGR1) from Bos taurus (Bovine).